A 1166-amino-acid polypeptide reads, in one-letter code: ATP-dependent helicase/deoxyribonuclease subunit B (1166 aa).

A UvrD-like helicase ATP-binding domain is found at methionine 1–serine 390. An ATP-binding site is contributed by glycine 8 to threonine 15. In terms of domain architecture, UvrD-like helicase C-terminal spans threonine 281–aspartate 586. The [4Fe-4S] cluster site is built by cysteine 801, cysteine 1121, cysteine 1124, and cysteine 1130.

This sequence belongs to the helicase family. AddB/RexB type 1 subfamily. Heterodimer of AddA and AddB. It depends on Mg(2+) as a cofactor. The cofactor is [4Fe-4S] cluster.

The heterodimer acts as both an ATP-dependent DNA helicase and an ATP-dependent, dual-direction single-stranded exonuclease. Recognizes the chi site generating a DNA molecule suitable for the initiation of homologous recombination. The AddB subunit has 5' -&gt; 3' nuclease activity but not helicase activity. This Bacillus velezensis (strain DSM 23117 / BGSC 10A6 / LMG 26770 / FZB42) (Bacillus amyloliquefaciens subsp. plantarum) protein is ATP-dependent helicase/deoxyribonuclease subunit B.